A 511-amino-acid chain; its full sequence is 2,3-bisphosphoglycerate-independent phosphoglycerate mutase (511 aa).

Asp-12 is a binding site for Mn(2+). Tyr-36 is subject to Phosphotyrosine. Position 62 (Ser-62) interacts with Mn(2+). The active-site Phosphoserine intermediate is the Ser-62. Residues His-123, 153 to 154 (RD), Arg-185, Arg-191, 261 to 264 (RPDR), and Lys-336 contribute to the substrate site. Mn(2+) contacts are provided by Asp-403, His-407, Asp-444, His-445, and His-462.

The protein belongs to the BPG-independent phosphoglycerate mutase family. Monomer. Mn(2+) is required as a cofactor.

The catalysed reaction is (2R)-2-phosphoglycerate = (2R)-3-phosphoglycerate. It participates in carbohydrate degradation; glycolysis; pyruvate from D-glyceraldehyde 3-phosphate: step 3/5. Functionally, essential for rapid growth and for sporulation. Catalyzes the interconversion of 2-phosphoglycerate and 3-phosphoglycerate. The sequence is that of 2,3-bisphosphoglycerate-independent phosphoglycerate mutase from Bacillus licheniformis (strain ATCC 14580 / DSM 13 / JCM 2505 / CCUG 7422 / NBRC 12200 / NCIMB 9375 / NCTC 10341 / NRRL NRS-1264 / Gibson 46).